Here is a 279-residue protein sequence, read N- to C-terminus: Large ribosomal subunit protein uL2 (279 aa).

The tract at residues 223 to 279 (TVRGSAMNPNDHPHGGGEGRSPVGMDAPRTPWGKRHMGVKTRNNKKSSTSMIVRRRK) is disordered. Over residues 254–267 (WGKRHMGVKTRNNK) the composition is skewed to basic residues.

Belongs to the universal ribosomal protein uL2 family. As to quaternary structure, part of the 50S ribosomal subunit. Forms a bridge to the 30S subunit in the 70S ribosome.

Its function is as follows. One of the primary rRNA binding proteins. Required for association of the 30S and 50S subunits to form the 70S ribosome, for tRNA binding and peptide bond formation. It has been suggested to have peptidyltransferase activity; this is somewhat controversial. Makes several contacts with the 16S rRNA in the 70S ribosome. The sequence is that of Large ribosomal subunit protein uL2 from Ureaplasma urealyticum serovar 10 (strain ATCC 33699 / Western).